Reading from the N-terminus, the 84-residue chain is DNA-directed RNA polymerase subunit Rpo5 (84 aa).

Belongs to the archaeal Rpo5/eukaryotic RPB5 RNA polymerase subunit family. Part of the RNA polymerase complex.

It is found in the cytoplasm. The catalysed reaction is RNA(n) + a ribonucleoside 5'-triphosphate = RNA(n+1) + diphosphate. Functionally, DNA-dependent RNA polymerase (RNAP) catalyzes the transcription of DNA into RNA using the four ribonucleoside triphosphates as substrates. The sequence is that of DNA-directed RNA polymerase subunit Rpo5 from Sulfurisphaera tokodaii (strain DSM 16993 / JCM 10545 / NBRC 100140 / 7) (Sulfolobus tokodaii).